We begin with the raw amino-acid sequence, 285 residues long: Ribose-phosphate pyrophosphokinase (285 aa).

ATP contacts are provided by residues 33–35 (DGE) and 91–92 (RQ). 2 residues coordinate Mg(2+): histidine 125 and aspartate 162. The active site involves lysine 185. Residues arginine 187, aspartate 211, and 215–219 (STGGT) contribute to the D-ribose 5-phosphate site.

This sequence belongs to the ribose-phosphate pyrophosphokinase family. Class III (archaeal) subfamily. Requires Mg(2+) as cofactor.

It is found in the cytoplasm. The catalysed reaction is D-ribose 5-phosphate + ATP = 5-phospho-alpha-D-ribose 1-diphosphate + AMP + H(+). Its pathway is metabolic intermediate biosynthesis; 5-phospho-alpha-D-ribose 1-diphosphate biosynthesis; 5-phospho-alpha-D-ribose 1-diphosphate from D-ribose 5-phosphate (route I): step 1/1. Functionally, involved in the biosynthesis of the central metabolite phospho-alpha-D-ribosyl-1-pyrophosphate (PRPP) via the transfer of pyrophosphoryl group from ATP to 1-hydroxyl of ribose-5-phosphate (Rib-5-P). This chain is Ribose-phosphate pyrophosphokinase, found in Methanothermobacter thermautotrophicus (strain ATCC 29096 / DSM 1053 / JCM 10044 / NBRC 100330 / Delta H) (Methanobacterium thermoautotrophicum).